A 98-amino-acid polypeptide reads, in one-letter code: Small ribosomal subunit protein bS20 (98 aa).

Positions 76-98 (HPNNGARKKSRLASKLKPIEQTA) are disordered.

This sequence belongs to the bacterial ribosomal protein bS20 family.

Its function is as follows. Binds directly to 16S ribosomal RNA. The chain is Small ribosomal subunit protein bS20 from Trichormus variabilis (strain ATCC 29413 / PCC 7937) (Anabaena variabilis).